Consider the following 267-residue polypeptide: 5'-nucleotidase SurE (267 aa).

4 residues coordinate a divalent metal cation: aspartate 9, aspartate 10, serine 40, and asparagine 97.

The protein belongs to the SurE nucleotidase family. A divalent metal cation serves as cofactor.

It is found in the cytoplasm. The catalysed reaction is a ribonucleoside 5'-phosphate + H2O = a ribonucleoside + phosphate. Nucleotidase that shows phosphatase activity on nucleoside 5'-monophosphates. This Helicobacter pylori (strain G27) protein is 5'-nucleotidase SurE.